The following is a 279-amino-acid chain: uncharacterized protein (279 aa).

The N-terminal stretch at Met-1 to Ala-31 is a signal peptide.

This is an uncharacterized protein from Corynebacterium glutamicum (strain ATCC 13032 / DSM 20300 / JCM 1318 / BCRC 11384 / CCUG 27702 / LMG 3730 / NBRC 12168 / NCIMB 10025 / NRRL B-2784 / 534).